The primary structure comprises 284 residues: Bifunctional protein FolD 1 (284 aa).

NADP(+) contacts are provided by residues 166-168 and I232; that span reads GAS.

Belongs to the tetrahydrofolate dehydrogenase/cyclohydrolase family. As to quaternary structure, homodimer.

It catalyses the reaction (6R)-5,10-methylene-5,6,7,8-tetrahydrofolate + NADP(+) = (6R)-5,10-methenyltetrahydrofolate + NADPH. It carries out the reaction (6R)-5,10-methenyltetrahydrofolate + H2O = (6R)-10-formyltetrahydrofolate + H(+). Its pathway is one-carbon metabolism; tetrahydrofolate interconversion. Its function is as follows. Catalyzes the oxidation of 5,10-methylenetetrahydrofolate to 5,10-methenyltetrahydrofolate and then the hydrolysis of 5,10-methenyltetrahydrofolate to 10-formyltetrahydrofolate. This chain is Bifunctional protein FolD 1, found in Pseudomonas savastanoi pv. phaseolicola (strain 1448A / Race 6) (Pseudomonas syringae pv. phaseolicola (strain 1448A / Race 6)).